The following is a 62-amino-acid chain: Large ribosomal subunit protein bL33 (62 aa).

The protein belongs to the bacterial ribosomal protein bL33 family.

This chain is Large ribosomal subunit protein bL33, found in Trichodesmium erythraeum (strain IMS101).